The following is a 181-amino-acid chain: Ribosome-recycling factor (181 aa).

The segment at 135–160 is disordered; it reads MDDIKKDKDMPEDDARKAEDQTQKLT.

It belongs to the RRF family.

Its subcellular location is the cytoplasm. Its function is as follows. Responsible for the release of ribosomes from messenger RNA at the termination of protein biosynthesis. May increase the efficiency of translation by recycling ribosomes from one round of translation to another. This chain is Ribosome-recycling factor, found in Leuconostoc mesenteroides subsp. mesenteroides (strain ATCC 8293 / DSM 20343 / BCRC 11652 / CCM 1803 / JCM 6124 / NCDO 523 / NBRC 100496 / NCIMB 8023 / NCTC 12954 / NRRL B-1118 / 37Y).